The chain runs to 130 residues: uncharacterized protein (130 aa).

3 helical membrane-spanning segments follow: residues 34 to 54 (AILIIAFGAGIIYIVPYFAFF), 73 to 93 (LLLTAYGIVSLLFYIPGGWLA), and 107 to 127 (FGTGIITFWYFLVGLKGIVWI).

Its subcellular location is the cell membrane. This is an uncharacterized protein from Mycoplasma pneumoniae (strain ATCC 29342 / M129 / Subtype 1) (Mycoplasmoides pneumoniae).